A 389-amino-acid chain; its full sequence is Lipopolysaccharide assembly protein B (389 aa).

Residues 1 to 20 (MLELLFLLLPVAAAYGWYMG) traverse the membrane as a helical segment. Residues 21 to 389 (RRSAQQNKQD…IKPIRGLDGL (369 aa)) are Cytoplasmic-facing. 7 TPR repeats span residues 35–68 (LSRDYVAGVNFLLSNQQDKAVDLFLDMLKEDTGT), 69–102 (VEAHLTLGNLFRSRGEVDRAIRIHQTLMESASLT), 107–140 (LLAIQQLGRDYMAAGLYDRAEDMFNQLTDETDFR), 142–174 (GALQQLLQIYQATSEWQKAIDVAERLVKLGKDK), 180–213 (AHFYCELALQHMASDDLDRAMTLLKKGAAADKNS), 214–247 (ARVSIMMGRVFMAKGEYAKAVESLQRVISQDREL), and 249–282 (SETLEMLQTCYQQLGKTAEWAEFLQRAVEENTGA). Residues Cys-357, Cys-360, Cys-371, and Cys-374 each coordinate Fe cation.

It belongs to the LapB family.

Its subcellular location is the cell inner membrane. Modulates cellular lipopolysaccharide (LPS) levels by regulating LpxC, which is involved in lipid A biosynthesis. May act by modulating the proteolytic activity of FtsH towards LpxC. May also coordinate assembly of proteins involved in LPS synthesis at the plasma membrane. This Escherichia coli O157:H7 protein is Lipopolysaccharide assembly protein B.